Reading from the N-terminus, the 195-residue chain is Myelin-associated neurite-outgrowth inhibitor (195 aa).

The Cytoplasmic segment spans residues 1 to 18; it reads MNPVYSPASSGVPYANPK. Residues 19–43 traverse the membrane as a helical segment; it reads GIGYPAGFPVGYAAAAPAYSPSMYP. Residues 44 to 143 lie on the Extracellular side of the membrane; the sequence is GANPAFPSGY…APPIPPPRPN (100 aa). Residues 144 to 163 traverse the membrane as a helical segment; the sequence is GVTMGMVGGTTMAMSAGTLL. Residues 164-195 are Cytoplasmic-facing; that stretch reads TTHSPTPVAPHPSMPTYRQPATPTYSYVPPQW.

The protein belongs to the FAM168 family.

Its subcellular location is the cytoplasm. It is found in the perinuclear region. It localises to the cell membrane. The protein resides in the cell projection. The protein localises to the axon. Functionally, inhibitor of neuronal axonal outgrowth. The sequence is that of Myelin-associated neurite-outgrowth inhibitor (fam168b) from Danio rerio (Zebrafish).